We begin with the raw amino-acid sequence, 609 residues long: Aspartate--tRNA(Asp/Asn) ligase (609 aa).

Glutamate 177 lines the L-aspartate pocket. An aspartate region spans residues 201-204 (QLFK). Arginine 223 is a binding site for L-aspartate. Residues 223-225 (RDE) and glutamine 232 contribute to the ATP site. Residue histidine 461 participates in L-aspartate binding. Glutamate 499 is an ATP binding site. Arginine 506 contacts L-aspartate. Residue 551–554 (GVDR) participates in ATP binding.

Belongs to the class-II aminoacyl-tRNA synthetase family. Type 1 subfamily. In terms of assembly, homodimer.

It localises to the cytoplasm. It carries out the reaction tRNA(Asx) + L-aspartate + ATP = L-aspartyl-tRNA(Asx) + AMP + diphosphate. Its function is as follows. Aspartyl-tRNA synthetase with relaxed tRNA specificity since it is able to aspartylate not only its cognate tRNA(Asp) but also tRNA(Asn). Reaction proceeds in two steps: L-aspartate is first activated by ATP to form Asp-AMP and then transferred to the acceptor end of tRNA(Asp/Asn). The chain is Aspartate--tRNA(Asp/Asn) ligase from Synechococcus sp. (strain CC9605).